The following is a 537-amino-acid chain: Chaperonin GroEL 2 (537 aa).

Residues 29 to 32 (TLGP), 86 to 90 (DGTTT), Gly412, and Asp495 each bind ATP.

This sequence belongs to the chaperonin (HSP60) family. Forms a cylinder of 14 subunits composed of two heptameric rings stacked back-to-back. Interacts with the co-chaperonin GroES.

The protein resides in the cytoplasm. It catalyses the reaction ATP + H2O + a folded polypeptide = ADP + phosphate + an unfolded polypeptide.. Its function is as follows. Together with its co-chaperonin GroES, plays an essential role in assisting protein folding. The GroEL-GroES system forms a nano-cage that allows encapsulation of the non-native substrate proteins and provides a physical environment optimized to promote and accelerate protein folding. This chain is Chaperonin GroEL 2, found in Paenarthrobacter aurescens (strain TC1).